The primary structure comprises 386 residues: MNIHEYQGKAVLRSYGVSVPNGKVAFTVEEAVEAAKELGTDVCVVKAQIHAGGRGKAGGVKVAKNLDEVRTYAESILGTTLVTHQTGPEGKEVKRLLIEEGCDIKKEYYVGLVLDRATSQVVLMASEEGGTEIEEVAEKTPEKIFKEYIDPAVGLQGFQARRIAFNINIPKELVGQAVKFMMGLYRAFIEKDCSIAEINPLVTTGEGKVMALDAKLNFDSNALYRHKDILELRDLDEEDSKEIEASKYDLNYIPLDGNIGCMVNGAGLAMATMDIIKHYHGDPANFLDVGGGATAEKVTEAFKIILSDKNVKGIFVNIFGGIMKCDVIAEGVIEATKQVGLELPLVVRLEGTNVELGKKILNESGLNIVAAESMADGAQKIVSLVG.

The ATP-grasp domain occupies 9-244 (KAVLRSYGVS…LDEEDSKEIE (236 aa)). Residues Lys-46, 53-55 (GRG), Glu-99, Cys-102, and Glu-107 contribute to the ATP site. Positions 199 and 213 each coordinate Mg(2+). Substrate is bound by residues Asn-264 and 321–323 (GIM).

The protein belongs to the succinate/malate CoA ligase beta subunit family. As to quaternary structure, heterotetramer of two alpha and two beta subunits. Requires Mg(2+) as cofactor.

The enzyme catalyses succinate + ATP + CoA = succinyl-CoA + ADP + phosphate. It catalyses the reaction GTP + succinate + CoA = succinyl-CoA + GDP + phosphate. The protein operates within carbohydrate metabolism; tricarboxylic acid cycle; succinate from succinyl-CoA (ligase route): step 1/1. Its function is as follows. Succinyl-CoA synthetase functions in the citric acid cycle (TCA), coupling the hydrolysis of succinyl-CoA to the synthesis of either ATP or GTP and thus represents the only step of substrate-level phosphorylation in the TCA. The beta subunit provides nucleotide specificity of the enzyme and binds the substrate succinate, while the binding sites for coenzyme A and phosphate are found in the alpha subunit. The polypeptide is Succinate--CoA ligase [ADP-forming] subunit beta (Bacillus cereus (strain B4264)).